Consider the following 140-residue polypeptide: Probable NADH dehydrogenase [ubiquinone] iron-sulfur protein 6, mitochondrial (140 aa).

Belongs to the complex I NDUFS6 subunit family. As to quaternary structure, complex I is composed of 45 different subunits. This is a component of the iron-sulfur (IP) fragment of the enzyme.

The protein localises to the mitochondrion inner membrane. Accessory subunit of the mitochondrial membrane respiratory chain NADH dehydrogenase (Complex I), that is believed not to be involved in catalysis. Complex I functions in the transfer of electrons from NADH to the respiratory chain. The immediate electron acceptor for the enzyme is believed to be ubiquinone. The sequence is that of Probable NADH dehydrogenase [ubiquinone] iron-sulfur protein 6, mitochondrial (nduf-6) from Caenorhabditis elegans.